Consider the following 45-residue polypeptide: Photosystem II reaction center protein K (45 aa).

The propeptide occupies 1 to 8 (MITAIIIA). Residues 23–43 (ILPVIPIFFLLLAFVWQAAIG) form a helical membrane-spanning segment.

Belongs to the PsbK family. PSII is composed of 1 copy each of membrane proteins PsbA, PsbB, PsbC, PsbD, PsbE, PsbF, PsbH, PsbI, PsbJ, PsbK, PsbL, PsbM, PsbT, PsbX, PsbY, PsbZ, Psb30/Ycf12, at least 3 peripheral proteins of the oxygen-evolving complex and a large number of cofactors. It forms dimeric complexes.

It is found in the plastid. Its subcellular location is the chloroplast thylakoid membrane. Functionally, one of the components of the core complex of photosystem II (PSII). PSII is a light-driven water:plastoquinone oxidoreductase that uses light energy to abstract electrons from H(2)O, generating O(2) and a proton gradient subsequently used for ATP formation. It consists of a core antenna complex that captures photons, and an electron transfer chain that converts photonic excitation into a charge separation. The protein is Photosystem II reaction center protein K of Gracilaria tenuistipitata var. liui (Red alga).